The chain runs to 228 residues: Histidine/lysine/arginine/ornithine transport system permease protein HisQ (228 aa).

Residues 1–12 lie on the Periplasmic side of the membrane; it reads MLYGFSGVILQG. A helical transmembrane segment spans residues 13-33; sequence AIVTLELALSSVVLAVLIGLV. Residues 13–212 form the ABC transmembrane type-1 domain; that stretch reads AIVTLELALS…VFTTVSNGVL (200 aa). The Cytoplasmic portion of the chain corresponds to 34 to 58; the sequence is GAGAKLSQNRVTGLIFEGYTTLIRG. A helical transmembrane segment spans residues 59 to 79; that stretch reads VPDLVLMLLIFYGLQIALNVV. At 80 to 87 the chain is on the periplasmic side; the sequence is TDSLGIDQ. The chain crosses the membrane as a helical span at residues 88–108; the sequence is IDIDPMVAGIITLGFIYGAYF. Residues 109 to 152 are Cytoplasmic-facing; the sequence is TETFRGAFMAVPKGHIEAATAFGFTHGQTFRRIMFPAMMRYALP. Residues 153–173 form a helical membrane-spanning segment; sequence GIGNNWQVILKATALVSLLGL. Residues 174-194 are Periplasmic-facing; the sequence is EDVVKATQLAGKSTWEPFYFA. The helical transmembrane segment at 195-215 threads the bilayer; sequence VVCGLIYLVFTTVSNGVLLLL. Residues 216 to 228 are Cytoplasmic-facing; sequence ERRYSVGVKRADL.

This sequence belongs to the binding-protein-dependent transport system permease family. HisMQ subfamily. The HisPMQJ complex is composed of two ATP-binding proteins (HisP), two transmembrane proteins (HisM and HisQ) and a solute-binding protein (HisJ). The HisPMQ-ArgT complex is composed of two ATP-binding proteins (HisP), two transmembrane proteins (HisM and HisQ) and a solute-binding protein (ArgT).

The protein localises to the cell inner membrane. Its function is as follows. Part of the ABC transporter complex HisPMQJ involved in histidine transport. Is also part of the ABC transporter complex HisPMQ-ArgT involved in lysine/arginine/ornithine transport. Probably responsible for the translocation of the substrate across the membrane. This Salmonella typhi protein is Histidine/lysine/arginine/ornithine transport system permease protein HisQ (hisQ).